The sequence spans 332 residues: uncharacterized protein (332 aa).

Positions 1–26 are cleaved as a signal peptide; sequence MSSLGKLLKLTLLGILLSFSCKFVFG.

The protein localises to the endoplasmic reticulum. This is an uncharacterized protein from Schizosaccharomyces pombe (strain 972 / ATCC 24843) (Fission yeast).